A 414-amino-acid polypeptide reads, in one-letter code: uncharacterized protein (414 aa).

The interval 204 to 230 (LVGTPAPGPNGSNSDGDSERASQDVRD) is disordered. The segment covering 220–230 (DSERASQDVRD) has biased composition (basic and acidic residues).

Belongs to the CdaR family.

This is an uncharacterized protein from Mycobacterium tuberculosis (strain CDC 1551 / Oshkosh).